Here is a 508-residue protein sequence, read N- to C-terminus: UDP-N-acetylmuramyl-tripeptide synthetase (508 aa).

Ser-35 is a UDP-N-acetyl-alpha-D-muramoyl-L-alanyl-D-glutamate binding site. 118–124 (GTDGKSS) lines the ATP pocket. UDP-N-acetyl-alpha-D-muramoyl-L-alanyl-D-glutamate is bound by residues 163 to 164 (ST), Thr-190, and Arg-200. At Lys-232 the chain carries N6-carboxylysine.

It belongs to the MurCDEF family. MurE subfamily. In terms of processing, carboxylation is probably crucial for Mg(2+) binding and, consequently, for the gamma-phosphate positioning of ATP.

It localises to the cytoplasm. Its pathway is cell wall biogenesis; peptidoglycan biosynthesis. Its function is as follows. Catalyzes the addition of an amino acid to the nucleotide precursor UDP-N-acetylmuramoyl-L-alanyl-D-glutamate (UMAG) in the biosynthesis of bacterial cell-wall peptidoglycan. The sequence is that of UDP-N-acetylmuramyl-tripeptide synthetase from Borreliella burgdorferi (strain ATCC 35210 / DSM 4680 / CIP 102532 / B31) (Borrelia burgdorferi).